Reading from the N-terminus, the 552-residue chain is Urocanate hydratase (552 aa).

NAD(+)-binding positions include 49–50 (GG), Q127, 173–175 (GMG), D193, 239–240 (NA), 260–264 (QTSAH), 270–271 (YI), and Y319. C407 is a catalytic residue. G489 contributes to the NAD(+) binding site.

The protein belongs to the urocanase family. Requires NAD(+) as cofactor.

It localises to the cytoplasm. It carries out the reaction 4-imidazolone-5-propanoate = trans-urocanate + H2O. It participates in amino-acid degradation; L-histidine degradation into L-glutamate; N-formimidoyl-L-glutamate from L-histidine: step 2/3. Catalyzes the conversion of urocanate to 4-imidazolone-5-propionate. The polypeptide is Urocanate hydratase (Bacillus cereus (strain B4264)).